A 163-amino-acid polypeptide reads, in one-letter code: Flagellar assembly factor FliW (163 aa).

The span at 136-156 shows a compositional bias: basic and acidic residues; the sequence is PFFETSEKKQSGLQRLERQPE. The interval 136-163 is disordered; that stretch reads PFFETSEKKQSGLQRLERQPEKSVPPAG.

Belongs to the FliW family. As to quaternary structure, interacts with translational regulator CsrA and flagellin(s).

The protein resides in the cytoplasm. Acts as an anti-CsrA protein, binds CsrA and prevents it from repressing translation of its target genes, one of which is flagellin. Binds to flagellin and participates in the assembly of the flagellum. This chain is Flagellar assembly factor FliW, found in Geotalea uraniireducens (strain Rf4) (Geobacter uraniireducens).